Here is a 365-residue protein sequence, read N- to C-terminus: tRNA dimethylallyltransferase (365 aa).

23–30 contributes to the ATP binding site; the sequence is APTASGKT. 25–30 is a binding site for substrate; it reads TASGKT. Interaction with substrate tRNA regions lie at residues 48–51, 172–176, and 256–261; these read DSAL, QRITR, and RCVGYR.

The protein belongs to the IPP transferase family. As to quaternary structure, monomer. Requires Mg(2+) as cofactor.

The enzyme catalyses adenosine(37) in tRNA + dimethylallyl diphosphate = N(6)-dimethylallyladenosine(37) in tRNA + diphosphate. Catalyzes the transfer of a dimethylallyl group onto the adenine at position 37 in tRNAs that read codons beginning with uridine, leading to the formation of N6-(dimethylallyl)adenosine (i(6)A). In Psychrobacter sp. (strain PRwf-1), this protein is tRNA dimethylallyltransferase.